Here is a 214-residue protein sequence, read N- to C-terminus: uncharacterized protein (214 aa).

The chain crosses the membrane as a helical span at residues 9–31 (FLYFAISVLVNLLFLKILYIYLF). Residues 53–74 (APPKKPGKPQKKVVKKKPEAVS) form a disordered region. Positions 54 to 67 (PPKKPGKPQKKVVK) are enriched in basic residues.

Its subcellular location is the membrane. This is an uncharacterized protein from Aquifex aeolicus (strain VF5).